Consider the following 94-residue polypeptide: uncharacterized protein (94 aa).

One can recognise an HTH cro/C1-type domain in the interval 13–67; the sequence is IQESLDELNVSLREFARAMEIAPSTASRLLTGKAALTPEMAIKLSVVIGSSPQMW. A DNA-binding region (H-T-H motif) is located at residues 24-43; the sequence is LREFARAMEIAPSTASRLLT.

This sequence belongs to the VapA/VapI family.

This is an uncharacterized protein from Escherichia coli (strain K12).